We begin with the raw amino-acid sequence, 1148 residues long: Envelopment polyprotein (1148 aa).

The first 23 residues, methionine 1–alanine 23, serve as a signal peptide directing secretion. Residues alanine 24 to methionine 495 are Lumenal-facing. Disulfide bonds link cysteine 34–cysteine 159, cysteine 68–cysteine 165, cysteine 117–cysteine 136, cysteine 141–cysteine 146, cysteine 183–cysteine 193, and cysteine 218–cysteine 257. Asparagine 142 carries an N-linked (GlcNAc...) asparagine; by host glycan. Asparagine 357 is a glycosylation site (N-linked (GlcNAc...) asparagine; by host). 4 disulfides stabilise this stretch: cysteine 386-cysteine 445, cysteine 390-cysteine 399, cysteine 415-cysteine 434, and cysteine 462-cysteine 485. N-linked (GlcNAc...) asparagine; by host glycosylation occurs at asparagine 409. A helical membrane pass occupies residues leucine 496–leucine 516. Over lysine 517–phenylalanine 637 the chain is Cytoplasmic. The binding to the ribonucleoprotein stretch occupies residues cysteine 526 to lysine 543. 2 consecutive CCHC-type zinc fingers follow at residues cysteine 555 to cysteine 575 and cysteine 580 to cysteine 601. Binding to the ribonucleoprotein stretches follow at residues phenylalanine 598 to leucine 615, lysine 602 to lysine 613, and methionine 621 to serine 635. The ITAM domain occupies methionine 621 to cysteine 644. A YxxL motif is present at residues tyrosine 625–leucine 628. The chain crosses the membrane as a helical span at residues phenylalanine 638–alanine 658. At glutamate 659–asparagine 1114 the chain is on the lumenal side. 8 cysteine pairs are disulfide-bonded: cysteine 745–cysteine 780, cysteine 749–cysteine 787, cysteine 761–cysteine 894, cysteine 775–cysteine 905, cysteine 790–cysteine 913, cysteine 816–cysteine 825, cysteine 833–cysteine 842, and cysteine 873–cysteine 877. The tract at residues tyrosine 767–cysteine 787 is fusion loop. Asparagine 937 carries an N-linked (GlcNAc...) asparagine; by host glycan. 5 disulfide bridges follow: cysteine 979–cysteine 1009, cysteine 1002–cysteine 1054, cysteine 1019–cysteine 1024, cysteine 1055–cysteine 1060, and cysteine 1094–cysteine 1098. The chain crosses the membrane as a helical span at residues tryptophan 1115–cysteine 1135. Binding to the ribonucleoprotein regions lie at residues leucine 1131 to arginine 1143 and leucine 1131 to proline 1148. Topologically, residues cysteine 1136–proline 1148 are cytoplasmic.

It belongs to the hantavirus envelope glycoprotein family. As to quaternary structure, homodimer. Homotetramer; forms heterotetrameric Gn-Gc spikes in the pre-fusion conformation. Interacts (via C-terminus) with the nucleoprotein. Interacts with host TUFM; this interaction contributes to the virus-induced degradation of mitochondria by autophagy, which leads to degradation of host MAVS and inhibition of type I interferon (IFN) responses. Interacts with host MAP1LC3B; this interaction contributes to the virus-induced degradation of mitochondria by autophagy, which leads to degradation of host MAVS and inhibition of type I interferon (IFN) responses. Homodimer. Homotetramer; forms heterotetrameric Gn-Gc spikes in the pre-fusion conformation. Homotrimer; forms homotrimer in the post-fusion conformation at acidic pH. Interacts (via C-terminus) with the nucleoprotein. Post-translationally, envelope polyprotein precursor is quickly cleaved in vivo just after synthesis, presumably by host signal peptidase.

The protein resides in the virion membrane. It is found in the host cell surface. It localises to the host Golgi apparatus membrane. Its subcellular location is the host endoplasmic reticulum membrane. The protein localises to the host mitochondrion. In terms of biological role, forms homotetramers with glycoprotein C at the surface of the virion. Attaches the virion to host cell receptors including integrin ITGAV/ITGB3. This attachment induces virion internalization predominantly through clathrin-dependent endocytosis. Mediates the assembly and budding of infectious virus particles through its interaction with the nucleocapsid protein and the viral genome. May dysregulate normal immune and endothelial cell responses through an ITAM motif. Translocates to mitochondria, binds to host TUFM and recruits MAP1LC3B. These interactions induce mitochondrial autophagy and therefore destruction of host MAVS leading to inhibition of type I interferon (IFN) responses. Concomitant breakdown of glycoprotein N is apparently prevented by the nucleoprotein that may inhibit Gn-stimulated autophagosome-lysosome fusion. Interacts with the viral genomic RNA. Functionally, forms homotetramers with glycoprotein N at the surface of the virion. Attaches the virion to host cell receptors including integrin ITGAV/ITGB3. This attachment induces virion internalization predominantly through clathrin-dependent endocytosis. Class II fusion protein that promotes fusion of viral membrane with host endosomal membrane after endocytosis of the virion. In Puumala virus (strain K27), this protein is Envelopment polyprotein (GP).